A 612-amino-acid polypeptide reads, in one-letter code: Probable methyltransferase PMT9 (612 aa).

The Cytoplasmic portion of the chain corresponds to 1 to 14; the sequence is MKHFRTERVRATPK. Residues 15 to 35 traverse the membrane as a helical; Signal-anchor for type II membrane protein segment; that stretch reads LFTYVLVGFIALLGLTCLYYG. The Lumenal segment spans residues 36–612; the sequence is SSFAPGSRKS…LWSLPAISVS (577 aa). Residues N107, N383, and N562 are each glycosylated (N-linked (GlcNAc...) asparagine).

The protein belongs to the methyltransferase superfamily.

Its subcellular location is the golgi apparatus membrane. The polypeptide is Probable methyltransferase PMT9 (Arabidopsis thaliana (Mouse-ear cress)).